A 240-amino-acid polypeptide reads, in one-letter code: Peptidyl-tRNA hydrolase 2 (240 aa).

Tyrosine 60 serves as a coordination point for tRNA. Histidine 65 functions as the Proton acceptor in the catalytic mechanism. 3 residues coordinate tRNA: tyrosine 111, asparagine 113, and asparagine 159.

It belongs to the PTH family. In terms of assembly, monomer.

The protein localises to the cytoplasm. The catalysed reaction is an N-acyl-L-alpha-aminoacyl-tRNA + H2O = an N-acyl-L-amino acid + a tRNA + H(+). Functionally, hydrolyzes ribosome-free peptidyl-tRNAs (with 1 or more amino acids incorporated), which drop off the ribosome during protein synthesis, or as a result of ribosome stalling. Its function is as follows. Catalyzes the release of premature peptidyl moieties from peptidyl-tRNA molecules trapped in stalled 50S ribosomal subunits, and thus maintains levels of free tRNAs and 50S ribosomes. The sequence is that of Peptidyl-tRNA hydrolase 2 from Corynebacterium jeikeium (strain K411).